An 805-amino-acid polypeptide reads, in one-letter code: N-(5-amino-5-carboxypentanoyl)-L-cysteinyl-D-valine synthase (805 aa).

Residues 783 to 805 (PDTGGGAVGSTTTGGVRGELREI) form a disordered region.

Belongs to the ATP-dependent AMP-binding enzyme family. Requires pantetheine 4'-phosphate as cofactor.

It carries out the reaction L-2-aminoadipate + L-valine + L-cysteine + 3 ATP + H2O = N-[(5S)-5-amino-5-carboxypentanoyl]-L-cysteinyl-D-valine + 3 AMP + 3 diphosphate + 3 H(+). It participates in antibiotic biosynthesis; penicillin G biosynthesis; penicillin G from L-alpha-aminoadipate and L-cysteine and L-valine: step 1/3. Each of the constituent amino acids of ACV are activated as aminoacyl-adenylates with peptide bonds formed through the participation of amino acid thioester intermediates. The chain is N-(5-amino-5-carboxypentanoyl)-L-cysteinyl-D-valine synthase (pcbAB) from Streptomyces clavuligerus.